Consider the following 287-residue polypeptide: Protein-export membrane protein SecF (287 aa).

6 helical membrane passes run 21-41, 129-149, 158-178, 182-202, 226-246, and 259-279; these read LIAI…FNGL, QIYW…FIIF, VILA…LFGI, LASV…DILL, VTMS…TVFV, and VLII…LGIL.

The protein belongs to the SecD/SecF family. SecF subfamily. As to quaternary structure, part of the protein translocation apparatus. Forms a complex with SecD.

Its subcellular location is the cell membrane. Functionally, involved in protein export. The protein is Protein-export membrane protein SecF of Methanothermobacter thermautotrophicus (strain ATCC 29096 / DSM 1053 / JCM 10044 / NBRC 100330 / Delta H) (Methanobacterium thermoautotrophicum).